Here is a 61-residue protein sequence, read N- to C-terminus: Putative antitoxin VapB21 (61 aa).

The protein belongs to the UPF0165 family.

Its function is as follows. Possibly the antitoxin component of a type II toxin-antitoxin (TA) system. Its cognate toxin is VapC21 (Potential). In Archaeoglobus fulgidus (strain ATCC 49558 / DSM 4304 / JCM 9628 / NBRC 100126 / VC-16), this protein is Putative antitoxin VapB21 (vapB21).